A 196-amino-acid chain; its full sequence is dITP/XTP pyrophosphatase (196 aa).

10–15 (TSNKGK) contributes to the substrate binding site. Asp-71 acts as the Proton acceptor in catalysis. Asp-71 contributes to the Mg(2+) binding site. Residues Ser-72, 156 to 159 (FGYD), Lys-179, and 184 to 185 (HR) each bind substrate.

Belongs to the HAM1 NTPase family. Homodimer. The cofactor is Mg(2+).

The catalysed reaction is XTP + H2O = XMP + diphosphate + H(+). The enzyme catalyses dITP + H2O = dIMP + diphosphate + H(+). It carries out the reaction ITP + H2O = IMP + diphosphate + H(+). Functionally, pyrophosphatase that catalyzes the hydrolysis of nucleoside triphosphates to their monophosphate derivatives, with a high preference for the non-canonical purine nucleotides XTP (xanthosine triphosphate), dITP (deoxyinosine triphosphate) and ITP. Seems to function as a house-cleaning enzyme that removes non-canonical purine nucleotides from the nucleotide pool, thus preventing their incorporation into DNA/RNA and avoiding chromosomal lesions. This is dITP/XTP pyrophosphatase from Haemophilus ducreyi (strain 35000HP / ATCC 700724).